Reading from the N-terminus, the 275-residue chain is 2,3,4,5-tetrahydropyridine-2,6-dicarboxylate N-succinyltransferase (275 aa).

Substrate-binding residues include arginine 104 and aspartate 141.

It belongs to the transferase hexapeptide repeat family. As to quaternary structure, homotrimer.

It is found in the cytoplasm. It carries out the reaction (S)-2,3,4,5-tetrahydrodipicolinate + succinyl-CoA + H2O = (S)-2-succinylamino-6-oxoheptanedioate + CoA. The protein operates within amino-acid biosynthesis; L-lysine biosynthesis via DAP pathway; LL-2,6-diaminopimelate from (S)-tetrahydrodipicolinate (succinylase route): step 1/3. The polypeptide is 2,3,4,5-tetrahydropyridine-2,6-dicarboxylate N-succinyltransferase (Haemophilus influenzae (strain PittEE)).